A 473-amino-acid polypeptide reads, in one-letter code: Cysteine--tRNA ligase (473 aa).

C27 is a binding site for Zn(2+). The short motif at I29 to H39 is the 'HIGH' region element. Zn(2+) contacts are provided by C213, H238, and E242. Positions K271–S275 match the 'KMSKS' region motif. K274 provides a ligand contact to ATP.

This sequence belongs to the class-I aminoacyl-tRNA synthetase family. Zn(2+) is required as a cofactor.

The protein resides in the cytoplasm. The catalysed reaction is tRNA(Cys) + L-cysteine + ATP = L-cysteinyl-tRNA(Cys) + AMP + diphosphate. This Pyrobaculum calidifontis (strain DSM 21063 / JCM 11548 / VA1) protein is Cysteine--tRNA ligase.